We begin with the raw amino-acid sequence, 500 residues long: NAD(P)H-quinone oxidoreductase chain 4, chloroplastic (500 aa).

14 helical membrane-spanning segments follow: residues 4–24 (FYWL…IALL), 37–57 (ICIC…HFQL), 80–100 (LGID…TTLA), 113–130 (LFHF…GLFS), 134–154 (LLLF…LLSM), 167–187 (FILY…GMGL), 208–228 (ALEI…SPII), 242–262 (HYST…YGLV), 272–292 (AHSI…IYAA), 305–325 (IAYS…SITD), 330–350 (GAIL…FLAG), 386–406 (LALP…GIIT), 416–436 (ILIT…SLSM), and 462–482 (IFIL…PDFV).

The protein belongs to the complex I subunit 4 family.

It localises to the plastid. The protein localises to the chloroplast thylakoid membrane. It catalyses the reaction a plastoquinone + NADH + (n+1) H(+)(in) = a plastoquinol + NAD(+) + n H(+)(out). The enzyme catalyses a plastoquinone + NADPH + (n+1) H(+)(in) = a plastoquinol + NADP(+) + n H(+)(out). The chain is NAD(P)H-quinone oxidoreductase chain 4, chloroplastic from Nuphar advena (Common spatterdock).